The chain runs to 174 residues: Co-chaperone protein HscB homolog (174 aa).

The J domain occupies 2 to 74; sequence NYFELFSLLP…IQRAEHLLAL (73 aa).

This sequence belongs to the HscB family. Interacts with HscA and stimulates its ATPase activity.

Co-chaperone involved in the maturation of iron-sulfur cluster-containing proteins. Seems to help targeting proteins to be folded toward HscA. This is Co-chaperone protein HscB homolog from Shewanella pealeana (strain ATCC 700345 / ANG-SQ1).